Here is a 520-residue protein sequence, read N- to C-terminus: GMP synthase [glutamine-hydrolyzing] (520 aa).

Residues Thr-9–Asp-202 form the Glutamine amidotransferase type-1 domain. Cys-86 functions as the Nucleophile in the catalytic mechanism. Active-site residues include His-176 and Glu-178. The region spanning Trp-203–Arg-395 is the GMPS ATP-PPase domain. Ser-230–Ser-236 lines the ATP pocket.

As to quaternary structure, homodimer.

It carries out the reaction XMP + L-glutamine + ATP + H2O = GMP + L-glutamate + AMP + diphosphate + 2 H(+). Its pathway is purine metabolism; GMP biosynthesis; GMP from XMP (L-Gln route): step 1/1. Its function is as follows. Catalyzes the synthesis of GMP from XMP. The protein is GMP synthase [glutamine-hydrolyzing] of Rhizobium rhizogenes (strain K84 / ATCC BAA-868) (Agrobacterium radiobacter).